Reading from the N-terminus, the 173-residue chain is Large ribosomal subunit protein bL9 (173 aa).

The segment at 151–173 (YDDTPDRTETEESTKELQEEHAE) is disordered.

Belongs to the bacterial ribosomal protein bL9 family.

Its function is as follows. Binds to the 23S rRNA. The chain is Large ribosomal subunit protein bL9 from Lawsonia intracellularis (strain PHE/MN1-00).